The sequence spans 156 residues: Transmembrane inner ear expressed protein (156 aa).

The signal sequence occupies residues 1-27; sequence MAGWPGAGPLCVLGGAALGVCLAGVAG. At 28–57 the chain is on the extracellular side; it reads QLVEPSTAPPKPKPPPLTKETVVFWDMRLW. The chain crosses the membrane as a helical span at residues 58–78; sequence HVVGIFSLFVLSIIITLCCVF. Over 79 to 156 the chain is Cytoplasmic; that stretch reads NCRVPRTRKE…NEAKKKKGEK (78 aa). The segment at 113–135 is disordered; sequence NELTEVPGEDKKKKKKKKKDSVD.

Forms the MET channel composed of TMC (TMC1 or TMC2), TMIE, TOMT, CIB (CIB2 or CIB3), LHPL5 and PCDH15. In terms of tissue distribution, expressed in many tissues.

The protein resides in the membrane. In terms of biological role, auxiliary subunit of the mechanotransducer (MET) non-specific cation channel complex located at the tips of stereocilia of cochlear hair cells and that mediates sensory transduction in the auditory system. The MET complex is composed of two dimeric pore-forming ion-conducting transmembrane TMC (TMC1 or TMC2) subunits, and aided by several auxiliary proteins including LHFPL5, TMIE, CIB2/3 and TOMT, and the tip-link PCDH15. May contribute to the formation of the pore. The polypeptide is Transmembrane inner ear expressed protein (TMIE) (Homo sapiens (Human)).